The chain runs to 323 residues: Cyclin-H (323 aa).

S5 is subject to Phosphoserine; by CDK8. Position 132 is a phosphoserine (S132). The interval 297-323 (YEDDDYVSKKSKHEEEEWTDDDLVESL) is disordered. Positions 302 to 311 (YVSKKSKHEE) are enriched in basic and acidic residues. A Phosphoserine; by CDK8 modification is found at S304. A compositionally biased stretch (acidic residues) spans 312–323 (EEWTDDDLVESL). T315 is modified (phosphothreonine). S322 is modified (phosphoserine).

The protein belongs to the cyclin family. Cyclin C subfamily. Associates primarily with CDK7 and MAT1 to form the CAK complex. CAK can further associate with the core-TFIIH to form the TFIIH basal transcription factor.

Its subcellular location is the nucleus. Its function is as follows. Regulates CDK7, the catalytic subunit of the CDK-activating kinase (CAK) enzymatic complex. CAK activates the cyclin-associated kinases CDK1, CDK2, CDK4 and CDK6 by threonine phosphorylation. CAK complexed to the core-TFIIH basal transcription factor activates RNA polymerase II by serine phosphorylation of the repetitive C-terminal domain (CTD) of its large subunit (POLR2A), allowing its escape from the promoter and elongation of the transcripts. Involved in cell cycle control and in RNA transcription by RNA polymerase II. Its expression and activity are constant throughout the cell cycle. The protein is Cyclin-H (CCNH) of Homo sapiens (Human).